The chain runs to 423 residues: L-cysteine:1D-myo-inositol 2-amino-2-deoxy-alpha-D-glucopyranoside ligase (423 aa).

Cysteine 43 contributes to the Zn(2+) binding site. Residues 43–46 (CGIT), threonine 58, and 81–83 (NVT) contribute to the L-cysteinyl-5'-AMP site. Positions 45–55 (ITPYDATHMGH) match the 'HIGH' region motif. A 'ERGGDP' region motif is present at residues 199-204 (ERGGDP). Tryptophan 240 lines the L-cysteinyl-5'-AMP pocket. Cysteine 244 contributes to the Zn(2+) binding site. An L-cysteinyl-5'-AMP-binding site is contributed by 262–264 (GSD). Histidine 269 contributes to the Zn(2+) binding site. Valine 295 provides a ligand contact to L-cysteinyl-5'-AMP. Positions 301–305 (KMSKS) match the 'KMSKS' region motif.

Belongs to the class-I aminoacyl-tRNA synthetase family. MshC subfamily. As to quaternary structure, monomer. It depends on Zn(2+) as a cofactor.

The enzyme catalyses 1D-myo-inositol 2-amino-2-deoxy-alpha-D-glucopyranoside + L-cysteine + ATP = 1D-myo-inositol 2-(L-cysteinylamino)-2-deoxy-alpha-D-glucopyranoside + AMP + diphosphate + H(+). Its function is as follows. Catalyzes the ATP-dependent condensation of GlcN-Ins and L-cysteine to form L-Cys-GlcN-Ins. The protein is L-cysteine:1D-myo-inositol 2-amino-2-deoxy-alpha-D-glucopyranoside ligase of Renibacterium salmoninarum (strain ATCC 33209 / DSM 20767 / JCM 11484 / NBRC 15589 / NCIMB 2235).